Reading from the N-terminus, the 128-residue chain is DELTA-urthionin-Uf1a (128 aa).

Positions 1 to 24 are cleaved as a signal peptide; sequence MEGKTVIVSLLLLSIVVGQIQVEA. Cystine bridges form between Cys27–Cys64, Cys28–Cys56, and Cys40–Cys50. Positions 67–128 are cleaved as a propeptide — acidic domain; sequence LSIPEVTGEA…LCTKNSIETA (62 aa).

This sequence belongs to the plant thionin (TC 1.C.44) family. In terms of tissue distribution, expressed in trichomes, that are stiff epidermal hairs located on the surface of petioles and leaves.

The protein resides in the secreted. In terms of biological role, plant defense protein that causes pain by probable disruption of cell membranes. Shows cytotoxic activity against the neuroblastoma cell line SH-SY5Y and slightly weaker activity against several non-neuronal cell lines. In vivo, intraplantar injection into mice causes several nocifensive responses, along with swelling and redness. The protein is DELTA-urthionin-Uf1a of Urtica ferox (Tree nettle).